We begin with the raw amino-acid sequence, 254 residues long: 5'/3'-nucleotidase SurE (254 aa).

Residues D9, D10, S40, and N93 each contribute to the a divalent metal cation site.

Belongs to the SurE nucleotidase family. Requires a divalent metal cation as cofactor.

Its subcellular location is the cytoplasm. It catalyses the reaction a ribonucleoside 5'-phosphate + H2O = a ribonucleoside + phosphate. The enzyme catalyses a ribonucleoside 3'-phosphate + H2O = a ribonucleoside + phosphate. The catalysed reaction is [phosphate](n) + H2O = [phosphate](n-1) + phosphate + H(+). Functionally, nucleotidase with a broad substrate specificity as it can dephosphorylate various ribo- and deoxyribonucleoside 5'-monophosphates and ribonucleoside 3'-monophosphates with highest affinity to 3'-AMP. Also hydrolyzes polyphosphate (exopolyphosphatase activity) with the preference for short-chain-length substrates (P20-25). Might be involved in the regulation of dNTP and NTP pools, and in the turnover of 3'-mononucleotides produced by numerous intracellular RNases (T1, T2, and F) during the degradation of various RNAs. The protein is 5'/3'-nucleotidase SurE of Photorhabdus laumondii subsp. laumondii (strain DSM 15139 / CIP 105565 / TT01) (Photorhabdus luminescens subsp. laumondii).